The chain runs to 318 residues: NADH-ubiquinone oxidoreductase chain 1 (318 aa).

8 helical membrane-spanning segments follow: residues 2 to 22 (FMIN…FLTL), 70 to 90 (MFII…IPLP), 100 to 120 (LGIL…LWSG), 147 to 167 (AIIL…TLII), 171 to 191 (YLWL…STLA), 217 to 237 (AGPF…MNIF), 253 to 273 (ELYS…FLWI), and 294 to 314 (LPLT…LSSI).

The protein belongs to the complex I subunit 1 family. Core subunit of respiratory chain NADH dehydrogenase (Complex I) which is composed of 45 different subunits.

It localises to the mitochondrion inner membrane. It carries out the reaction a ubiquinone + NADH + 5 H(+)(in) = a ubiquinol + NAD(+) + 4 H(+)(out). In terms of biological role, core subunit of the mitochondrial membrane respiratory chain NADH dehydrogenase (Complex I) which catalyzes electron transfer from NADH through the respiratory chain, using ubiquinone as an electron acceptor. Essential for the catalytic activity and assembly of complex I. The sequence is that of NADH-ubiquinone oxidoreductase chain 1 (MT-ND1) from Equus caballus (Horse).